A 1111-amino-acid chain; its full sequence is ATP-dependent DNA helicase mph1 (1111 aa).

Composition is skewed to acidic residues over residues 1–18 (MSVSGDDSDDYFDHEIDD) and 47–65 (VFDESDISIDQGDGEDEFQ). Disordered stretches follow at residues 1–81 (MSVS…EDVE), 101–144 (FVTQ…HQPD), 210–240 (AFDSDLSLSPPRTTSQATRGPPVQSQFRTNR), and 259–280 (IPSQRGEQILSPPEKNEPPTHH). Polar residues-rich tracts occupy residues 132 to 143 (PTTTTVDASHQP) and 215 to 238 (LSLSPPRTTSQATRGPPVQSQFRT). The Helicase ATP-binding domain occupies 306–474 (IAQRGLFHNL…AVIDGLGIAK (169 aa)). 319 to 326 (LPTGLGKT) contributes to the ATP binding site. A DEAH box motif is present at residues 422 to 425 (DEAH). The Helicase C-terminal domain occupies 644–818 (YLKQVVLNHF…GTRFTFHDDT (175 aa)). Disordered regions lie at residues 836 to 898 (IDIP…RKPT), 998 to 1047 (SVLS…CTPE), and 1092 to 1111 (AERHVSRKRNRFVLDDDTEE). The segment covering 852 to 864 (KRARPPKRPPKKF) has biased composition (basic residues).

This sequence belongs to the DEAD box helicase family. DEAH subfamily. FANCM sub-subfamily. As to quaternary structure, interacts with the MHF histone-fold complex to form the FANCM-MHF complex.

It localises to the nucleus. It catalyses the reaction ATP + H2O = ADP + phosphate + H(+). ATP-dependent DNA helicase involved in DNA damage repair by homologous recombination and in genome maintenance. Capable of unwinding D-loops. Plays a role in limiting crossover recombinants during mitotic DNA double-strand break (DSB) repair. Component of a FANCM-MHF complex which promotes gene conversion at blocked replication forks, probably by reversal of the stalled fork. In Neosartorya fischeri (strain ATCC 1020 / DSM 3700 / CBS 544.65 / FGSC A1164 / JCM 1740 / NRRL 181 / WB 181) (Aspergillus fischerianus), this protein is ATP-dependent DNA helicase mph1.